The primary structure comprises 353 residues: Putative transcription factor MTF1 (353 aa).

Polar residues-rich tracts occupy residues 11–26 (VTRSNQQTAANTTSPA) and 36–58 (EPSNVSDLTSEPVESTQIKQQGN). Disordered regions lie at residues 11–96 (VTRS…ALPC) and 129–174 (FTTT…TTNP). Low complexity-rich tracts occupy residues 59–95 (TEASQDIQQEQQQQQTHIHPQQPALSAQQTQQQPALP) and 133–145 (NSSPNPSSPSPSS). The segment covering 148-164 (SHTRKNSKYTVRHHRTR) has biased composition (basic residues). A compositionally biased stretch (polar residues) spans 165 to 174 (QSSFNGTTNP).

It localises to the nucleus. In terms of biological role, may be involved in transcriptional activation. The chain is Putative transcription factor MTF1 (MTF1) from Mucor circinelloides f. lusitanicus (Mucor racemosus var. lusitanicus).